Here is a 201-residue protein sequence, read N- to C-terminus: Putative ankyrin repeat protein YahD (201 aa).

6 ANK repeats span residues 5 to 34, 38 to 67, 71 to 100, 104 to 134, 138 to 172, and 176 to 201; these read NLPADYLLAAQQGDIDKVKTCLALGVDINT, QGKTAITLASLYQQYACVQALIDAGADINK, TCLNPFLISCLNDDLTLLRIILPAKPDLNC, FGGVGLTPACEKGHLSIVKELLAHTEINVNQ, VGWTPLLEAIVLNDGGIKQQAIVQLLLEHGASPHL, and YGKTPLELARERGFEEIAQLLIAAGA.

In Escherichia coli (strain K12), this protein is Putative ankyrin repeat protein YahD (yahD).